A 161-amino-acid polypeptide reads, in one-letter code: Large ribosomal subunit protein uL15 (161 aa).

Residues 1–47 (MKLHELHDNPGANRKKKRVARGPGSGKGKTAGRGIKGQTSRSGVALN) are disordered. Residues 23-35 (PGSGKGKTAGRGI) are compositionally biased toward gly residues.

The protein belongs to the universal ribosomal protein uL15 family. As to quaternary structure, part of the 50S ribosomal subunit.

Binds to the 23S rRNA. This Paracoccus denitrificans (strain Pd 1222) protein is Large ribosomal subunit protein uL15.